Here is a 310-residue protein sequence, read N- to C-terminus: Antiviral protein II/III (310 aa).

The N-terminal stretch at 1 to 25 is a signal peptide; the sequence is MKMKVLEVVGLAISIWLMLTPPASS. Disulfide bonds link Cys57–Cys284 and Cys106–Cys123. The active site involves Tyr94. Catalysis depends on residues Tyr142, Glu197, and Arg200.

This sequence belongs to the ribosome-inactivating protein family. Type 1 RIP subfamily. As to expression, PAP-II is expressed in early summer leaves (at protein level). PAP-III is expressed in late summer leaves (at protein level).

The enzyme catalyses Endohydrolysis of the N-glycosidic bond at one specific adenosine on the 28S rRNA.. Functionally, possesses antiviral potency. Inhibits viral infection of plants (tobacco mosaic virus). Inhibits protein synthesis in both prokaryotes and eukaryotes. The polypeptide is Antiviral protein II/III (PAP2) (Phytolacca americana (American pokeweed)).